A 185-amino-acid chain; its full sequence is Elongation factor P (185 aa).

It belongs to the elongation factor P family.

It is found in the cytoplasm. It functions in the pathway protein biosynthesis; polypeptide chain elongation. Functionally, involved in peptide bond synthesis. Stimulates efficient translation and peptide-bond synthesis on native or reconstituted 70S ribosomes in vitro. Probably functions indirectly by altering the affinity of the ribosome for aminoacyl-tRNA, thus increasing their reactivity as acceptors for peptidyl transferase. The protein is Elongation factor P of Metamycoplasma arthritidis (strain 158L3-1) (Mycoplasma arthritidis).